Consider the following 156-residue polypeptide: Small ribosomal subunit protein uS7 (156 aa).

It belongs to the universal ribosomal protein uS7 family. In terms of assembly, part of the 30S ribosomal subunit. Contacts proteins S9 and S11.

Its function is as follows. One of the primary rRNA binding proteins, it binds directly to 16S rRNA where it nucleates assembly of the head domain of the 30S subunit. Is located at the subunit interface close to the decoding center, probably blocks exit of the E-site tRNA. This Aeromonas salmonicida (strain A449) protein is Small ribosomal subunit protein uS7.